The following is an 88-amino-acid chain: RNA-binding protein Hfq (88 aa).

Residues 9–68 (DPFLNALRCERIPVSIYLVNGIKLQGQIESFDQFVILLKNTVNQMVYKHAISTVVPARAV) form the Sm domain. A disordered region spans residues 66-88 (RAVSHHTASDRPQGERPQETTEE). Residues 72 to 88 (TASDRPQGERPQETTEE) show a composition bias toward basic and acidic residues.

Belongs to the Hfq family. In terms of assembly, homohexamer.

In terms of biological role, RNA chaperone that binds small regulatory RNA (sRNAs) and mRNAs to facilitate mRNA translational regulation in response to envelope stress, environmental stress and changes in metabolite concentrations. Also binds with high specificity to tRNAs. The protein is RNA-binding protein Hfq of Aliivibrio salmonicida (strain LFI1238) (Vibrio salmonicida (strain LFI1238)).